The following is a 283-amino-acid chain: Gap junction alpha-6 protein (283 aa).

The Cytoplasmic segment spans residues 1–23; that stretch reads MSDWSALHQLLEKVQPYSTAGGK. A helical transmembrane segment spans residues 24 to 41; the sequence is VWIKVLFIFRILLLGTAI. Topologically, residues 42–76 are extracellular; that stretch reads ESAWSDEQFEFHCNTQQPGCENVCYDHAFPISHVR. The chain crosses the membrane as a helical span at residues 77–99; sequence LWVLQVIFVSVPILLYLAHVYYV. At 100–150 the chain is on the cytoplasmic side; sequence VRQNKKLNKQEEELEAAHFNEASVERHLETIAGEQFKCGSEEQSKVKMRGR. A helical transmembrane segment spans residues 151-173; the sequence is LLLTYMASIFFKSVFEMAFLLIQ. Over 174–208 the chain is Extracellular; sequence WYIYGFTLSALYICEQSPCPRRVDCFLSRPTEKTI. A helical transmembrane segment spans residues 209–231; the sequence is FILFMFVVSVVSFVLDIIELFYV. Residues 232–283 lie on the Cytoplasmic side of the membrane; sequence LFKAIKNRMRKAEDEVYCDELPCPSHVSSSTVLTTIDSSEQAVPVELSSVCI.

The protein belongs to the connexin family. Alpha-type (group II) subfamily. In terms of assembly, a connexon is composed of a hexamer of connexins.

It localises to the cell membrane. Its subcellular location is the cell junction. The protein resides in the gap junction. Functionally, one gap junction consists of a cluster of closely packed pairs of transmembrane channels, the connexons, through which materials of low MW diffuse from one cell to a neighboring cell. The polypeptide is Gap junction alpha-6 protein (Gja6) (Mus musculus (Mouse)).